Here is a 301-residue protein sequence, read N- to C-terminus: Homoserine kinase (301 aa).

89 to 99 contributes to the ATP binding site; sequence KPGSGLGSSSA.

This sequence belongs to the GHMP kinase family. Homoserine kinase subfamily.

The protein localises to the cytoplasm. The catalysed reaction is L-homoserine + ATP = O-phospho-L-homoserine + ADP + H(+). It participates in amino-acid biosynthesis; L-threonine biosynthesis; L-threonine from L-aspartate: step 4/5. Its function is as follows. Catalyzes the ATP-dependent phosphorylation of L-homoserine to L-homoserine phosphate. The sequence is that of Homoserine kinase from Methanococcus maripaludis (strain DSM 14266 / JCM 13030 / NBRC 101832 / S2 / LL).